The chain runs to 207 residues: MARYIGPKAKLSRREGTDLFLKSARRSLADKCKLDSKPGQHGRTSGARTSDYGTQLREKQKVKRIYGVLERQFRRYFAEADRRKGNTGENLLKLLESRLDNVVYRMGFGSTRAEARQLVSHKAITVNGVVANIPSLQVKAGDVIAVREQAKKQARILEALSLAEQGGLPQWVAVDSKKFEGTFKSMPERSDIAGDINESLIVELYSR.

Residues lysine 31 to glutamine 55 form a disordered region. Positions glycine 42–glycine 53 are enriched in polar residues. The region spanning serine 97–leucine 160 is the S4 RNA-binding domain.

The protein belongs to the universal ribosomal protein uS4 family. In terms of assembly, part of the 30S ribosomal subunit. Contacts protein S5. The interaction surface between S4 and S5 is involved in control of translational fidelity.

Functionally, one of the primary rRNA binding proteins, it binds directly to 16S rRNA where it nucleates assembly of the body of the 30S subunit. With S5 and S12 plays an important role in translational accuracy. The chain is Small ribosomal subunit protein uS4 from Paraburkholderia phymatum (strain DSM 17167 / CIP 108236 / LMG 21445 / STM815) (Burkholderia phymatum).